The chain runs to 266 residues: Glutamate racemase (266 aa).

Substrate-binding positions include 9-10 (DS) and 41-42 (YG). Catalysis depends on Cys72, which acts as the Proton donor/acceptor. Position 73–74 (73–74 (NT)) interacts with substrate. Residue Cys183 is the Proton donor/acceptor of the active site. 184 to 185 (TH) contacts substrate.

This sequence belongs to the aspartate/glutamate racemases family.

It catalyses the reaction L-glutamate = D-glutamate. It functions in the pathway cell wall biogenesis; peptidoglycan biosynthesis. Its function is as follows. Provides the (R)-glutamate required for cell wall biosynthesis. This chain is Glutamate racemase, found in Listeria monocytogenes serotype 4a (strain HCC23).